The sequence spans 283 residues: MARRPGAPAAYGEDFSFVSPLVKYLLFFFNMLFWVISMVMVAVGVYARLMKHEEAALACLAVDPAILLIVVGILMFLLTFCGCIGSLRENICLLQTFSLCLTVVFLLQLAAGVLGFVFSDKVRGKVSEIINNAIVHYRDDLDLQNLIDFGQKEFSCCGGISYKDWSLNMYFNCSEDNPSRERCSVPYSCCLPTPNQAVINTMCGQGMQALDYLEASKVIYTNGCIDRLVNWIHSNLFVLGGVALGLAIPQLVGIMLSMILVSQIKDQIKLQLYNQQHRADPWY.

Over 1–24 (MARRPGAPAAYGEDFSFVSPLVKY) the chain is Cytoplasmic. A helical transmembrane segment spans residues 25–45 (LLFFFNMLFWVISMVMVAVGV). The Extracellular portion of the chain corresponds to 46–64 (YARLMKHEEAALACLAVDP). A helical transmembrane segment spans residues 65–85 (AILLIVVGILMFLLTFCGCIG). The Cytoplasmic portion of the chain corresponds to 86–96 (SLRENICLLQT). Residues 97 to 117 (FSLCLTVVFLLQLAAGVLGFV) form a helical membrane-spanning segment. Over 118-235 (FSDKVRGKVS…DRLVNWIHSN (118 aa)) the chain is Extracellular. 4 disulfide bridges follow: Cys156–Cys224, Cys157–Cys189, Cys173–Cys183, and Cys190–Cys203. Asn172 carries N-linked (GlcNAc...) asparagine glycosylation. Residues 236–256 (LFVLGGVALGLAIPQLVGIML) traverse the membrane as a helical segment. Over 257–283 (SMILVSQIKDQIKLQLYNQQHRADPWY) the chain is Cytoplasmic.

This sequence belongs to the tetraspanin (TM4SF) family. In terms of assembly, homodimer; disulfide-linked. Interacts (via extracellular domain) with ADAM10 (via extracellular domain). Interacts (via cytoplasmic domain) with PLEKHA7 (via WW domains); the interaction is dependent on PDZD11 being bound to PLEKHA7 and facilitates the docking of ADAM10 to zonula adherens.

Its subcellular location is the cell membrane. It is found in the cell junction. The protein localises to the adherens junction. The protein resides in the cytoplasm. In terms of biological role, part of TspanC8 subgroup, composed of 6 members that interact with the transmembrane metalloprotease ADAM10. This interaction is required for ADAM10 exit from the endoplasmic reticulum and for enzymatic maturation and trafficking to the cell surface as well as substrate specificity. Different TspanC8/ADAM10 complexes have distinct substrates. Plays an important role in normal erythropoiesis. It has a role in the differentiation of erythroid progenitors. Negatively regulates ligand-induced Notch activity probably by regulating ADAM10 activity. Mediates docking of ADAM10 to zonula adherens by interacting with ADAM10 and, in a PDZD11-dependent manner, with the zonula adherens protein PLEKHA7. The chain is Tetraspanin-33 (TSPAN33) from Bos taurus (Bovine).